The sequence spans 240 residues: Methylthioribulose-1-phosphate dehydratase (240 aa).

Residues 1–17 (MAQEVENNNNDHLVQSS) show a composition bias toward polar residues. Positions 1 to 20 (MAQEVENNNNDHLVQSSDPE) are disordered. Residue C100 participates in substrate binding. 2 residues coordinate Zn(2+): H117 and H119. E146 functions as the Proton donor/acceptor in the catalytic mechanism. H202 provides a ligand contact to Zn(2+).

It belongs to the aldolase class II family. MtnB subfamily. Requires Zn(2+) as cofactor.

It is found in the cytoplasm. It carries out the reaction 5-(methylsulfanyl)-D-ribulose 1-phosphate = 5-methylsulfanyl-2,3-dioxopentyl phosphate + H2O. It participates in amino-acid biosynthesis; L-methionine biosynthesis via salvage pathway; L-methionine from S-methyl-5-thio-alpha-D-ribose 1-phosphate: step 2/6. In terms of biological role, catalyzes the dehydration of methylthioribulose-1-phosphate (MTRu-1-P) into 2,3-diketo-5-methylthiopentyl-1-phosphate (DK-MTP-1-P). The protein is Methylthioribulose-1-phosphate dehydratase of Neosartorya fischeri (strain ATCC 1020 / DSM 3700 / CBS 544.65 / FGSC A1164 / JCM 1740 / NRRL 181 / WB 181) (Aspergillus fischerianus).